A 691-amino-acid polypeptide reads, in one-letter code: Penicillin-binding protein 2D (691 aa).

Residues 1–19 (MDAMTNKRLRLTLKTVRAF) lie on the Cytoplasmic side of the membrane. A helical; Signal-anchor for type II membrane protein membrane pass occupies residues 20 to 40 (IFLGAFAALAAAAVFMTVILI). The Extracellular portion of the chain corresponds to 41-691 (AKYQGAPSVQ…WWDKWLGRHH (651 aa)). Residues 55–223 (TILYASDGSK…PSGYSPYVNE (169 aa)) form a transglycosylase region. E94 (proton donor; for transglycosylase activity) is an active-site residue. The segment at 327–605 (VGFSAIDPRT…AKTIWADFME (279 aa)) is transpeptidase. S365 functions as the Acyl-ester intermediate; for transpeptidase activity in the catalytic mechanism. The segment at 663 to 691 (AKQTKDRLPSKEKPASEKKWWDKWLGRHH) is disordered. Residues 664 to 691 (KQTKDRLPSKEKPASEKKWWDKWLGRHH) show a composition bias toward basic and acidic residues.

In the N-terminal section; belongs to the glycosyltransferase 51 family. It in the C-terminal section; belongs to the transpeptidase family.

Its subcellular location is the cell membrane. The enzyme catalyses [GlcNAc-(1-&gt;4)-Mur2Ac(oyl-L-Ala-gamma-D-Glu-L-Lys-D-Ala-D-Ala)](n)-di-trans,octa-cis-undecaprenyl diphosphate + beta-D-GlcNAc-(1-&gt;4)-Mur2Ac(oyl-L-Ala-gamma-D-Glu-L-Lys-D-Ala-D-Ala)-di-trans,octa-cis-undecaprenyl diphosphate = [GlcNAc-(1-&gt;4)-Mur2Ac(oyl-L-Ala-gamma-D-Glu-L-Lys-D-Ala-D-Ala)](n+1)-di-trans,octa-cis-undecaprenyl diphosphate + di-trans,octa-cis-undecaprenyl diphosphate + H(+). It carries out the reaction Preferential cleavage: (Ac)2-L-Lys-D-Ala-|-D-Ala. Also transpeptidation of peptidyl-alanyl moieties that are N-acyl substituents of D-alanine.. It participates in cell wall biogenesis; peptidoglycan biosynthesis. Its function is as follows. Involved in the polymerization and cross-linking of spore peptidoglycan. May be required for synthesis of the spore germ cell wall, the first layer of peptidoglycan synthesized on the surface of the inner forespore membrane. In Bacillus subtilis (strain 168), this protein is Penicillin-binding protein 2D (pbpG).